The sequence spans 135 residues: Flagellar assembly factor FliW 1 (135 aa).

Belongs to the FliW family. As to quaternary structure, interacts with translational regulator CsrA and flagellin(s).

The protein localises to the cytoplasm. Functionally, acts as an anti-CsrA protein, binds CsrA and prevents it from repressing translation of its target genes, one of which is flagellin. Binds to flagellin and participates in the assembly of the flagellum. The polypeptide is Flagellar assembly factor FliW 1 (Helicobacter pylori (strain ATCC 700392 / 26695) (Campylobacter pylori)).